Reading from the N-terminus, the 324-residue chain is Ribonucleoside-diphosphate reductase subunit beta nrdF2 (324 aa).

The Fe cation site is built by Glu-103 and His-106. Tyr-110 is a catalytic residue. 3 residues coordinate Fe cation: Glu-163, Glu-197, and His-200.

This sequence belongs to the ribonucleoside diphosphate reductase small chain family. In terms of assembly, tetramer of two alpha and two beta subunits. Requires Fe cation as cofactor.

The catalysed reaction is a 2'-deoxyribonucleoside 5'-diphosphate + [thioredoxin]-disulfide + H2O = a ribonucleoside 5'-diphosphate + [thioredoxin]-dithiol. Provides the precursors necessary for DNA synthesis. Catalyzes the biosynthesis of deoxyribonucleotides from the corresponding ribonucleotides. The sequence is that of Ribonucleoside-diphosphate reductase subunit beta nrdF2 (nrdF2) from Mycobacterium tuberculosis (strain CDC 1551 / Oshkosh).